The sequence spans 287 residues: ATP synthase gamma chain (287 aa).

It belongs to the ATPase gamma chain family. In terms of assembly, F-type ATPases have 2 components, CF(1) - the catalytic core - and CF(0) - the membrane proton channel. CF(1) has five subunits: alpha(3), beta(3), gamma(1), delta(1), epsilon(1). CF(0) has three main subunits: a, b and c.

The protein resides in the cell inner membrane. Functionally, produces ATP from ADP in the presence of a proton gradient across the membrane. The gamma chain is believed to be important in regulating ATPase activity and the flow of protons through the CF(0) complex. The chain is ATP synthase gamma chain from Escherichia fergusonii (strain ATCC 35469 / DSM 13698 / CCUG 18766 / IAM 14443 / JCM 21226 / LMG 7866 / NBRC 102419 / NCTC 12128 / CDC 0568-73).